The chain runs to 201 residues: Protein TraJ (201 aa).

The protein localises to the cytoplasm. In terms of biological role, this protein is essential for positively regulating the expression of transfer genes that are involved in the conjugal transfer of DNA between bacterial cells. The protein is Protein TraJ (traJ) of Escherichia coli.